A 126-amino-acid polypeptide reads, in one-letter code: Fatty acid-binding protein, liver (126 aa).

Ala-2 is modified (N-acetylalanine). The cholate site is built by Lys-77, His-99, and Gln-101.

This sequence belongs to the calycin superfamily. Fatty-acid binding protein (FABP) family.

Its subcellular location is the cytoplasm. Its function is as follows. Binds free fatty acids and their coenzyme A derivatives, bilirubin, and some other small molecules in the cytoplasm. May be involved in intracellular lipid transport. In Aquarana catesbeiana (American bullfrog), this protein is Fatty acid-binding protein, liver (fabp1).